The chain runs to 1036 residues: Multiple C2 domain and transmembrane region protein 2 (1036 aa).

The region spanning 1–110 (MRNTTKLVVH…YKDDQVYQRF (110 aa)) is the C2 1 domain. 2 disordered regions span residues 137 to 204 (DQTF…PVQK) and 225 to 246 (RENP…HPQN). A compositionally biased stretch (polar residues) spans 146–155 (PYTSPTQASA). A compositionally biased stretch (acidic residues) spans 158 to 168 (TEEDTADSETE). The segment covering 190–204 (VEGKKSEEVKEPVQK) has biased composition (basic and acidic residues). 3 C2 domains span residues 277 to 399 (PNAG…PQWY), 440 to 563 (VHGE…SRWF), and 607 to 734 (YISD…THSF). Residues aspartate 316, aspartate 364, glutamate 366, and aspartate 372 each coordinate Ca(2+). The next 2 helical transmembrane spans lie at 871–891 (FILV…MFFI) and 979–999 (LFIL…FKAI).

The protein belongs to the MCTP family. Ca(2+) serves as cofactor. As to expression, expressed in the vascular tissues of roots and rosette leaves. Accumulates in roots meristems. Observed in flowers.

It is found in the cell membrane. Its function is as follows. May function as a signaling molecule by regulating the trafficking of other regulators. The sequence is that of Multiple C2 domain and transmembrane region protein 2 from Arabidopsis thaliana (Mouse-ear cress).